The following is a 1178-amino-acid chain: Pyruvate carboxylase 1 (1178 aa).

The Biotin carboxylation domain occupies 18 to 470; it reads EKNKILVANR…WTTFIDDTPQ (453 aa). ATP is bound by residues lysine 136, glutamate 220, and histidine 255. An ATP-grasp domain is found at 140-337; the sequence is RNLAAKANVP…IVAAQIQIAA (198 aa). The active site involves arginine 312. Residues 557–824 enclose the Pyruvate carboxyltransferase domain; the sequence is TLLMDTTWRD…DTGINVEHVR (268 aa). Substrate is bound by residues 565-569 and arginine 638; that span reads RDAHQ. Aspartate 566 provides a ligand contact to a divalent metal cation. Residues lysine 734, histidine 764, and histidine 766 each coordinate a divalent metal cation. Lysine 734 carries the post-translational modification N6-carboxylysine. Residue threonine 898 coordinates substrate. The region spanning 1094-1169 is the Biotinyl-binding domain; it reads KADMHDPLHI…DSSDLLVLLE (76 aa). Lysine 1135 carries the N6-biotinyllysine modification.

As to quaternary structure, homotetramer. Requires biotin as cofactor. The cofactor is Zn(2+).

It is found in the cytoplasm. It carries out the reaction hydrogencarbonate + pyruvate + ATP = oxaloacetate + ADP + phosphate + H(+). It functions in the pathway carbohydrate biosynthesis; gluconeogenesis. Pyruvate carboxylase catalyzes a 2-step reaction, involving the ATP-dependent carboxylation of the covalently attached biotin in the first step and the transfer of the carboxyl group to pyruvate in the second. This is Pyruvate carboxylase 1 (PYC1) from Saccharomyces cerevisiae (strain ATCC 204508 / S288c) (Baker's yeast).